The following is a 322-amino-acid chain: Malate dehydrogenase (322 aa).

Residues 10-15 (GSGQIG) and Asp34 each bind NAD(+). The substrate site is built by Arg83 and Arg89. Residues Asn96 and 119–121 (ITN) each bind NAD(+). Residues Asn121 and Arg152 each contribute to the substrate site. His176 serves as the catalytic Proton acceptor.

The protein belongs to the LDH/MDH superfamily. MDH type 3 family.

The enzyme catalyses (S)-malate + NAD(+) = oxaloacetate + NADH + H(+). In terms of biological role, catalyzes the reversible oxidation of malate to oxaloacetate. This Rhodopseudomonas palustris (strain HaA2) protein is Malate dehydrogenase.